Here is a 351-residue protein sequence, read N- to C-terminus: Glucan endo-1,3-beta-glucosidase (351 aa).

An N-terminal signal peptide occupies residues Met-1–Ala-32. Residue Gln-33 is modified to Pyrrolidone carboxylic acid. N-linked (GlcNAc...) asparagine glycans are attached at residues Asn-79 and Asn-99. The Proton donor role is filled by Glu-128. Asn-235 is a glycosylation site (N-linked (GlcNAc...) asparagine). Glu-268 acts as the Nucleophile in catalysis.

It belongs to the glycosyl hydrolase 17 family. In terms of processing, glycosylated. Post-translationally, the N-terminus is blocked.

It is found in the secreted. Its subcellular location is the extracellular space. The protein resides in the extracellular matrix. It catalyses the reaction Hydrolysis of (1-&gt;3)-beta-D-glucosidic linkages in (1-&gt;3)-beta-D-glucans.. Implicated in the defense of plants against pathogens. This Nicotiana tabacum (Common tobacco) protein is Glucan endo-1,3-beta-glucosidase (SP41B).